Consider the following 240-residue polypeptide: RNA transcription, translation and transport factor protein (240 aa).

The protein belongs to the RTRAF family. Homodimer. Component of a tRNA-splicing ligase complex.

It is found in the nucleus. The protein resides in the cytoplasm. The protein localises to the cytosol. Its subcellular location is the perinuclear region. It localises to the cytoskeleton. It is found in the microtubule organizing center. The protein resides in the centrosome. Its function is as follows. RNA-binding protein involved in modulation of mRNA transcription by Polymerase II. Component of the tRNA-splicing ligase complex. The chain is RNA transcription, translation and transport factor protein from Xenopus laevis (African clawed frog).